The sequence spans 1361 residues: Protein transport protein SEC16B homolog (1361 aa).

Residue Ser46 is modified to Phosphoserine. Disordered stretches follow at residues 82-109 (NEGA…HSDA), 487-513 (VDDA…GRPP), 984-1013 (PVGG…QEAT), 1025-1062 (SSLM…GRTP), 1163-1204 (ENKS…ARGR), 1216-1235 (NPPG…VQTA), and 1306-1361 (SVNG…EVEL). Residues 491 to 503 (PQSFQSSQLFSPS) are compositionally biased toward low complexity. Over residues 996 to 1013 (TKGNLQGNEYQHQQQEAT) the composition is skewed to polar residues. 3 stretches are compositionally biased toward polar residues: residues 1169–1200 (IPSN…NQFS), 1222–1234 (NSHT…SVQT), and 1308–1325 (NGDN…SWSG). Low complexity predominate over residues 1326 to 1354 (NFNTSFTPPTSPSTFKPVLLNSSSSSLGE).

Belongs to the SEC16 family.

The protein localises to the golgi apparatus. It is found in the endoplasmic reticulum. Functionally, required for protein transport from the endoplasmic reticulum to the Golgi apparatus. This Arabidopsis thaliana (Mouse-ear cress) protein is Protein transport protein SEC16B homolog.